The following is a 133-amino-acid chain: UPF0102 protein bll0669 (133 aa).

The protein belongs to the UPF0102 family.

In Bradyrhizobium diazoefficiens (strain JCM 10833 / BCRC 13528 / IAM 13628 / NBRC 14792 / USDA 110), this protein is UPF0102 protein bll0669.